The primary structure comprises 604 residues: Putative sodium-dependent multivitamin transporter (604 aa).

The next 6 helical transmembrane spans lie at L4–I24, V48–V68, M78–I98, V134–L154, I160–L180, and L188–L208. N222 and N225 each carry an N-linked (GlcNAc...) asparagine glycan. 7 helical membrane-spanning segments follow: residues H234–N254, A273–L293, L331–I351, L389–L409, L413–V433, G440–P460, and A511–L531.

This sequence belongs to the sodium:solute symporter (SSF) (TC 2.A.21) family.

The protein resides in the cell membrane. The polypeptide is Putative sodium-dependent multivitamin transporter (Drosophila melanogaster (Fruit fly)).